A 902-amino-acid chain; its full sequence is Protein translocase subunit SecA (902 aa).

Residues glutamine 87, glycine 105 to threonine 109, and aspartate 512 each bind ATP. A disordered region spans residues arginine 850–glycine 902. A compositionally biased stretch (polar residues) spans lysine 853–serine 868. Residues cysteine 886, cysteine 888, cysteine 897, and histidine 898 each contribute to the Zn(2+) site. Over residues lysine 892–glycine 902 the composition is skewed to basic residues.

This sequence belongs to the SecA family. As to quaternary structure, monomer and homodimer. Part of the essential Sec protein translocation apparatus which comprises SecA, SecYEG and auxiliary proteins SecDF-YajC and YidC. Zn(2+) serves as cofactor.

It localises to the cell inner membrane. It is found in the cytoplasm. It catalyses the reaction ATP + H2O + cellular proteinSide 1 = ADP + phosphate + cellular proteinSide 2.. Its function is as follows. Part of the Sec protein translocase complex. Interacts with the SecYEG preprotein conducting channel. Has a central role in coupling the hydrolysis of ATP to the transfer of proteins into and across the cell membrane, serving both as a receptor for the preprotein-SecB complex and as an ATP-driven molecular motor driving the stepwise translocation of polypeptide chains across the membrane. The chain is Protein translocase subunit SecA from Proteus mirabilis (strain HI4320).